A 394-amino-acid polypeptide reads, in one-letter code: GDSL esterase/lipase At2g27360 (394 aa).

The signal sequence occupies residues 1 to 24 (MASQDCHMLLSFFISTFLITVVTS). The active-site Nucleophile is the Ser-40. Residues Asn-136 and Asn-319 are each glycosylated (N-linked (GlcNAc...) asparagine). Catalysis depends on residues Asp-344 and His-347. Residues Asn-371 and Asn-382 are each glycosylated (N-linked (GlcNAc...) asparagine).

This sequence belongs to the 'GDSL' lipolytic enzyme family.

Its subcellular location is the secreted. The chain is GDSL esterase/lipase At2g27360 from Arabidopsis thaliana (Mouse-ear cress).